A 313-amino-acid polypeptide reads, in one-letter code: Protein-methionine-sulfoxide reductase catalytic subunit MsrP (313 aa).

Residues 1–44 (MARWRPDTAEREATPEALYLRRREFLALGAAGAVGLLLPRGARA) constitute a signal peptide (tat-type signal). Mo-molybdopterin-binding positions include Asn76, 79–80 (YE), Cys134, Thr169, Asn217, Arg222, and 233–235 (GAK).

This sequence belongs to the MsrP family. As to quaternary structure, heterodimer of a catalytic subunit (MsrP) and a heme-binding subunit (MsrQ). Mo-molybdopterin is required as a cofactor. In terms of processing, predicted to be exported by the Tat system. The position of the signal peptide cleavage has not been experimentally proven.

The protein resides in the periplasm. The catalysed reaction is L-methionyl-[protein] + a quinone + H2O = L-methionyl-(S)-S-oxide-[protein] + a quinol. It catalyses the reaction L-methionyl-[protein] + a quinone + H2O = L-methionyl-(R)-S-oxide-[protein] + a quinol. Functionally, part of the MsrPQ system that repairs oxidized periplasmic proteins containing methionine sulfoxide residues (Met-O), using respiratory chain electrons. Thus protects these proteins from oxidative-stress damage caused by reactive species of oxygen and chlorine generated by the host defense mechanisms. MsrPQ is essential for the maintenance of envelope integrity under bleach stress, rescuing a wide series of structurally unrelated periplasmic proteins from methionine oxidation. The catalytic subunit MsrP is non-stereospecific, being able to reduce both (R-) and (S-) diastereoisomers of methionine sulfoxide. The sequence is that of Protein-methionine-sulfoxide reductase catalytic subunit MsrP from Anaeromyxobacter dehalogenans (strain 2CP-C).